Consider the following 427-residue polypeptide: Serine--tRNA ligase (427 aa).

233–235 is an L-serine binding site; the sequence is TAE. 264–266 lines the ATP pocket; sequence RSE. L-serine is bound at residue Glu-287. Residue 351–354 coordinates ATP; it reads EISS. Residue Ser-387 coordinates L-serine.

This sequence belongs to the class-II aminoacyl-tRNA synthetase family. Type-1 seryl-tRNA synthetase subfamily. Homodimer. The tRNA molecule binds across the dimer.

The protein localises to the cytoplasm. The catalysed reaction is tRNA(Ser) + L-serine + ATP = L-seryl-tRNA(Ser) + AMP + diphosphate + H(+). It catalyses the reaction tRNA(Sec) + L-serine + ATP = L-seryl-tRNA(Sec) + AMP + diphosphate + H(+). It functions in the pathway aminoacyl-tRNA biosynthesis; selenocysteinyl-tRNA(Sec) biosynthesis; L-seryl-tRNA(Sec) from L-serine and tRNA(Sec): step 1/1. In terms of biological role, catalyzes the attachment of serine to tRNA(Ser). Is also able to aminoacylate tRNA(Sec) with serine, to form the misacylated tRNA L-seryl-tRNA(Sec), which will be further converted into selenocysteinyl-tRNA(Sec). In Buchnera aphidicola subsp. Schizaphis graminum (strain Sg), this protein is Serine--tRNA ligase.